The primary structure comprises 116 residues: Large ribosomal subunit protein uL22c (116 aa).

Belongs to the universal ribosomal protein uL22 family. Part of the 50S ribosomal subunit.

The protein resides in the plastid. Its subcellular location is the chloroplast. Functionally, this protein binds specifically to 23S rRNA. Its function is as follows. The globular domain of the protein is located near the polypeptide exit tunnel on the outside of the subunit, while an extended beta-hairpin is found that lines the wall of the exit tunnel in the center of the 70S ribosome. This is Large ribosomal subunit protein uL22c (rpl22) from Euglena gracilis.